The primary structure comprises 453 residues: Aminodeoxychorismate synthase component 1 (453 aa).

Residues Ser36, 43 to 46 (YSRF), and 240 to 242 (PFS) contribute to the L-tryptophan site. Glu258 functions as the Proton donor in the catalytic mechanism. The N6-(4-deoxychorismate)-lysine intermediate role is filled by Lys274.

It belongs to the anthranilate synthase component I family. In terms of assembly, monomer. Heterodimer consisting of two non-identical subunits: a glutamine amidotransferase subunit (PabA) and a aminodeoxychorismate synthase subunit (PabB). Mg(2+) serves as cofactor.

The enzyme catalyses chorismate + L-glutamine = 4-amino-4-deoxychorismate + L-glutamate. The protein operates within cofactor biosynthesis; tetrahydrofolate biosynthesis; 4-aminobenzoate from chorismate: step 1/2. Its activity is regulated as follows. Inhibited by 6-diazo-5-oxo-L-norleucine (DON). The inhibition is competitive with glutamine but uncompetitive with chorismate. Also inhibited by 2-fluorochorismate. Functionally, part of a heterodimeric complex that catalyzes the two-step biosynthesis of 4-amino-4-deoxychorismate (ADC), a precursor of p-aminobenzoate (PABA) and tetrahydrofolate. In the first step, a glutamine amidotransferase (PabA) generates ammonia as a substrate that, along with chorismate, is used in the second step, catalyzed by aminodeoxychorismate synthase (PabB) to produce ADC. PabB, in the absence of PabA, can catalyze the formation of ADC in the presence of exogenous ammonia. The chain is Aminodeoxychorismate synthase component 1 (pabB) from Escherichia coli (strain K12).